The primary structure comprises 62 residues: Prokaryotic ubiquitin-like protein Pup 2 (62 aa).

Residues 1–34 (MRQEKPKRHGREDDEPPEPAPAGRARDTTVGDDT) form a disordered region. Residues 21 to 56 (PAGRARDTTVGDDTDELLDEIDGVLEENAVEFVRSY) form an ARC ATPase binding region. Residue Glu-62 forms an Isoglutamyl lysine isopeptide (Glu-Lys) (interchain with K-? in acceptor proteins) linkage.

The protein belongs to the prokaryotic ubiquitin-like protein family. As to quaternary structure, strongly interacts with the proteasome-associated ATPase ARC through a hydrophobic interface; the interacting region of Pup lies in its C-terminal half. There is one Pup binding site per ARC hexamer ring.

The protein operates within protein degradation; proteasomal Pup-dependent pathway. In terms of biological role, protein modifier that is covalently attached to lysine residues of substrate proteins, thereby targeting them for proteasomal degradation. The tagging system is termed pupylation. This chain is Prokaryotic ubiquitin-like protein Pup 2, found in Saccharopolyspora erythraea (strain ATCC 11635 / DSM 40517 / JCM 4748 / NBRC 13426 / NCIMB 8594 / NRRL 2338).